Consider the following 975-residue polypeptide: Protein HIRA (975 aa).

WD repeat units lie at residues 10 to 50, 64 to 103, 123 to 162, 165 to 204, 214 to 256, 259 to 331, and 335 to 374; these read RHEG…KDND, DHFG…GTSE, GHTA…CTAV, GHSS…LAHR, GSTF…ATFD, GHNA…PLFV, and FFTQ…LGYR. Low complexity predominate over residues 418–433; sequence KKVSSVQQFQSPPKVS. 2 disordered regions span residues 418–510 and 948–975; these read KKVS…RSQN and NVEQ…NGAS. Residues 435 to 445 show a composition bias toward polar residues; the sequence is DAPNPSTSVPN. A compositionally biased stretch (basic and acidic residues) spans 478-492; the sequence is KQREYRRPDGRKRII. A compositionally biased stretch (polar residues) spans 499 to 510; it reads PSNQDMSNRSQN. The stretch at 923 to 954 forms a coiled coil; sequence ATNRKVQRLLNEFMDLLSEYEAAETNVEQMDV.

This sequence belongs to the WD repeat HIR1 family.

Its subcellular location is the nucleus. Histone chaperone involved in maintining knox genes silencing throughout leaf development. This chain is Protein HIRA, found in Oryza sativa subsp. japonica (Rice).